The sequence spans 177 residues: Adenine phosphoribosyltransferase (177 aa).

It belongs to the purine/pyrimidine phosphoribosyltransferase family. As to quaternary structure, homodimer.

The protein resides in the cytoplasm. The enzyme catalyses AMP + diphosphate = 5-phospho-alpha-D-ribose 1-diphosphate + adenine. The protein operates within purine metabolism; AMP biosynthesis via salvage pathway; AMP from adenine: step 1/1. Catalyzes a salvage reaction resulting in the formation of AMP, that is energically less costly than de novo synthesis. The polypeptide is Adenine phosphoribosyltransferase (Leptospira biflexa serovar Patoc (strain Patoc 1 / Ames)).